Reading from the N-terminus, the 259-residue chain is Acetylglutamate kinase (259 aa).

Residues 45 to 46, arginine 67, and asparagine 159 each bind substrate; that span reads GG.

The protein belongs to the acetylglutamate kinase family. ArgB subfamily.

The protein localises to the cytoplasm. It carries out the reaction N-acetyl-L-glutamate + ATP = N-acetyl-L-glutamyl 5-phosphate + ADP. It participates in amino-acid biosynthesis; L-arginine biosynthesis; N(2)-acetyl-L-ornithine from L-glutamate: step 2/4. In terms of biological role, catalyzes the ATP-dependent phosphorylation of N-acetyl-L-glutamate. The protein is Acetylglutamate kinase of Aeromonas hydrophila subsp. hydrophila (strain ATCC 7966 / DSM 30187 / BCRC 13018 / CCUG 14551 / JCM 1027 / KCTC 2358 / NCIMB 9240 / NCTC 8049).